The sequence spans 302 residues: Dioxygenase ALT11 (302 aa).

The interval 1-22 is disordered; it reads MSSPELPSQMGVPNGHTKLQEV. Histidine 147, aspartate 149, and histidine 223 together coordinate Fe cation.

It belongs to the PhyH family. As to quaternary structure, homodimer. Fe cation is required as a cofactor.

The protein operates within mycotoxin biosynthesis. In terms of biological role, dioxygenase; part of the gene cluster that mediates the biosynthesis of the host-selective toxins (HSTs) AAL-toxins, sphinganine-analog mycotoxins responsible for Alternaria stem canker on tomato by the tomato pathotype. The biosynthesis starts with the polyketide synthase ALT1-catalyzed C-16 carbon chain assembly from one starter acetyl-CoA unit with malonyl-CoA extender units. ALT1 also selectively transfers methyl groups at the first and the third cycle of chain elongation for AAL toxin. The C-16 polyketide chain is released from the enzyme by a nucleophilic attack of a carbanion, which is derived from R-carbon of glycin by decarboxylation, on the carbonyl carbon of polyketide acyl chain. This step is probably catalyzed by a pyridoxal 5'-phosphate-dependent aminoacyl transferase ALT4. The respective functions of the other enzymes encoded by the cluster have still to be elucidated. The sphingosine N-acyltransferase-like protein ALT7 seems not to act as a resistance/self-tolerance factor against the toxin in the toxin biosynthetic gene cluster, contrary to what is expected. The polypeptide is Dioxygenase ALT11 (Alternaria alternata (Alternaria rot fungus)).